Reading from the N-terminus, the 159-residue chain is S-ribosylhomocysteine lyase 1 (159 aa).

Fe cation-binding residues include histidine 54, histidine 58, and cysteine 124.

It belongs to the LuxS family. In terms of assembly, homodimer. Fe cation serves as cofactor.

It carries out the reaction S-(5-deoxy-D-ribos-5-yl)-L-homocysteine = (S)-4,5-dihydroxypentane-2,3-dione + L-homocysteine. Involved in the synthesis of autoinducer 2 (AI-2) which is secreted by bacteria and is used to communicate both the cell density and the metabolic potential of the environment. The regulation of gene expression in response to changes in cell density is called quorum sensing. Catalyzes the transformation of S-ribosylhomocysteine (RHC) to homocysteine (HC) and 4,5-dihydroxy-2,3-pentadione (DPD). This Lactobacillus delbrueckii subsp. bulgaricus (strain ATCC BAA-365 / Lb-18) protein is S-ribosylhomocysteine lyase 1.